The primary structure comprises 253 residues: Imidazole glycerol phosphate synthase subunit HisF (253 aa).

Catalysis depends on residues D13 and D132.

The protein belongs to the HisA/HisF family. As to quaternary structure, heterodimer of HisH and HisF.

It is found in the cytoplasm. The enzyme catalyses 5-[(5-phospho-1-deoxy-D-ribulos-1-ylimino)methylamino]-1-(5-phospho-beta-D-ribosyl)imidazole-4-carboxamide + L-glutamine = D-erythro-1-(imidazol-4-yl)glycerol 3-phosphate + 5-amino-1-(5-phospho-beta-D-ribosyl)imidazole-4-carboxamide + L-glutamate + H(+). The protein operates within amino-acid biosynthesis; L-histidine biosynthesis; L-histidine from 5-phospho-alpha-D-ribose 1-diphosphate: step 5/9. IGPS catalyzes the conversion of PRFAR and glutamine to IGP, AICAR and glutamate. The HisF subunit catalyzes the cyclization activity that produces IGP and AICAR from PRFAR using the ammonia provided by the HisH subunit. The protein is Imidazole glycerol phosphate synthase subunit HisF of Aliarcobacter butzleri (strain RM4018) (Arcobacter butzleri).